The primary structure comprises 401 residues: Insertion element ISM1 uncharacterized 48.3 kDa protein (401 aa).

In terms of biological role, this polypeptide is involved in transposition, and should therefore bind to nucleic acids. This Methanobrevibacter smithii protein is Insertion element ISM1 uncharacterized 48.3 kDa protein.